A 788-amino-acid polypeptide reads, in one-letter code: Glycerol-3-phosphate acyltransferase (788 aa).

The interval 104–135 is disordered; the sequence is LLPGRDPYHPNPRQQRRILRSDPQRARVMAGE. The short motif at 271 to 276 is the HXXXXD motif element; sequence SHRSYI.

The protein belongs to the GPAT/DAPAT family.

Its subcellular location is the cell membrane. The catalysed reaction is sn-glycerol 3-phosphate + an acyl-CoA = a 1-acyl-sn-glycero-3-phosphate + CoA. It functions in the pathway phospholipid metabolism; CDP-diacylglycerol biosynthesis; CDP-diacylglycerol from sn-glycerol 3-phosphate: step 1/3. In Mycobacterium marinum (strain ATCC BAA-535 / M), this protein is Glycerol-3-phosphate acyltransferase.